A 173-amino-acid chain; its full sequence is Aliphatic sulfonate oxidoreductase, polyferredoxin-like subunit (173 aa).

3 consecutive 4Fe-4S ferredoxin-type domains span residues 9–40 (IWILITPDKCSGCRLCEVTCSLEHEGIIWPEA), 48–80 (LFPGINVPHTCVQCPDYPCVNACPTNALSVDEK), and 82–111 (GAVVVNEEKCITCGACVLACPGKVPRIPAG). The [4Fe-4S] cluster site is built by cysteine 18, cysteine 21, cysteine 24, cysteine 28, cysteine 58, cysteine 61, cysteine 66, cysteine 70, cysteine 91, cysteine 94, cysteine 97, cysteine 101, cysteine 118, cysteine 121, cysteine 127, and cysteine 131.

In terms of assembly, heterodimer composed of a small WOR5-S subunit, with four [4Fe-4S] clusters, and a large WOR5-L subunit, containing the active site tungsto-bispyranopterin cofactor as well as another [4Fe-4S] cluster. Requires [4Fe-4S] cluster as cofactor.

It localises to the cytoplasm. In terms of biological role, polyferredoxin-like subunit of an oxidoreductase that can desulfonate and oxidize aliphatic sulfonates such as taurine. May serve as a an electron-transfer subunit between the catalytic subunit and ferredoxin. The protein is Aliphatic sulfonate oxidoreductase, polyferredoxin-like subunit of Pyrococcus furiosus (strain ATCC 43587 / DSM 3638 / JCM 8422 / Vc1).